We begin with the raw amino-acid sequence, 38 residues long: Spheniscin-2 (38 aa).

Cystine bridges form between Cys-5/Cys-33, Cys-12/Cys-27, and Cys-17/Cys-34.

As to quaternary structure, monomer. In terms of tissue distribution, secreted into the stomach cavity.

The protein resides in the secreted. Its function is as follows. Has antifungal activity and antibacterial activity against Gram-positive and Gram-negative bacteria. Involved in the process of food preservation in the stomach during the incubation fast. May also be present during infection. The polypeptide is Spheniscin-2 (Aptenodytes patagonicus (King penguin)).